Here is a 304-residue protein sequence, read N- to C-terminus: Negative regulator of the PHO system (304 aa).

The Protein kinase domain maps to 7-297; sequence FKQLEKVGNG…AKDALNHPWF (291 aa). Residues 13–21 and lysine 36 contribute to the ATP site; that span reads VGNGTYATV. Aspartate 133 (proton acceptor) is an active-site residue.

It belongs to the protein kinase superfamily. CMGC Ser/Thr protein kinase family. CDC2/CDKX subfamily. In terms of assembly, interacts with a number of cyclins.

The catalysed reaction is L-seryl-[protein] + ATP = O-phospho-L-seryl-[protein] + ADP + H(+). It carries out the reaction L-threonyl-[protein] + ATP = O-phospho-L-threonyl-[protein] + ADP + H(+). Functionally, when phosphate concentrations are high it phosphorylates the PHO4 transcription factor thus establishing repression. The protein is Negative regulator of the PHO system (PHO85) of Kluyveromyces lactis (strain ATCC 8585 / CBS 2359 / DSM 70799 / NBRC 1267 / NRRL Y-1140 / WM37) (Yeast).